We begin with the raw amino-acid sequence, 487 residues long: Serine/threonine-protein kinase 4 (487 aa).

An N-acetylmethionine modification is found at Met-1. Thr-3 is subject to Phosphothreonine. Positions Phe-30–Val-281 constitute a Protein kinase domain. ATP-binding positions include Leu-36–Val-44 and Lys-59. The active-site Proton acceptor is the Asp-149. Position 183 is a phosphothreonine; by autocatalysis (Thr-183). Phosphoserine is present on residues Ser-265 and Ser-320. Positions Ile-289–Ser-327 form a coiled coil. Residues Gln-305–Arg-332 form a disordered region. Residues Asp-313–Asp-326 are compositionally biased toward acidic residues. Phosphothreonine is present on residues Thr-340 and Thr-367. Thr-387 bears the Phosphothreonine; by PKB/AKT1 mark. Phosphoserine occurs at positions 410 and 414. Tyr-433 carries the phosphotyrosine modification. One can recognise an SARAH domain in the interval Tyr-433–Lys-480.

It belongs to the protein kinase superfamily. STE Ser/Thr protein kinase family. STE20 subfamily. Homodimer; mediated via the coiled-coil region. Interacts with NORE1, which inhibits autoactivation. Interacts with and stabilizes SAV1. Interacts with RASSF1. Interacts with FOXO3. Interacts with RASSF2 (via SARAH domain). Interacts with AR, PKB/AKT1, TNNI3 and SIRT1. Interacts with DLG5 (via PDZ domain 3). Interacts with MARK3 and SCRIB in the presence of DLG5. Mg(2+) serves as cofactor. Post-translationally, autophosphorylated on serine and threonine residues. Phosphorylation at Thr-387 by PKB/AKT1, leads to inhibition of its: kinase activity, nuclear translocation and autophosphorylation at Thr-183. It also diminishes its cleavage by caspases and its ability to phosphorylate FOXO3. Proteolytically cleaved by caspase-3 during apoptosis at Asp-326 and Asp-349 resulting in a 37 kDa or a 39 kDa subunit respectively. The 39 kDa subunit is further cleaved into the 37 kDa form. Proteolytic cleavage results in kinase activation and nuclear translocation of the truncated form (MST1/N). It is less likely that cleavage at Asp-349 is a prerequisite for activation as this site is not conserved in the murine ortholog.

The protein resides in the cytoplasm. It localises to the nucleus. The enzyme catalyses L-seryl-[protein] + ATP = O-phospho-L-seryl-[protein] + ADP + H(+). It catalyses the reaction L-threonyl-[protein] + ATP = O-phospho-L-threonyl-[protein] + ADP + H(+). Inhibited by the C-terminal non-catalytic region. Activated by caspase-cleavage. Full activation also requires homodimerization and autophosphorylation of Thr-183. Activated by RASSF1 which acts by preventing its dephosphorylation. Functionally, stress-activated, pro-apoptotic kinase which, following caspase-cleavage, enters the nucleus and induces chromatin condensation followed by internucleosomal DNA fragmentation. Key component of the Hippo signaling pathway which plays a pivotal role in organ size control and tumor suppression by restricting proliferation and promoting apoptosis. The core of this pathway is composed of a kinase cascade wherein STK3/MST2 and STK4/MST1, in complex with its regulatory protein SAV1, phosphorylates and activates LATS1/2 in complex with its regulatory protein MOB1, which in turn phosphorylates and inactivates YAP1 oncoprotein and WWTR1/TAZ. Phosphorylation of YAP1 by LATS2 inhibits its translocation into the nucleus to regulate cellular genes important for cell proliferation, cell death, and cell migration. STK3/MST2 and STK4/MST1 are required to repress proliferation of mature hepatocytes, to prevent activation of facultative adult liver stem cells (oval cells), and to inhibit tumor formation. Phosphorylates 'Ser-14' of histone H2B (H2BS14ph) during apoptosis. Phosphorylates FOXO3 upon oxidative stress, which results in its nuclear translocation and cell death initiation. Phosphorylates MOBKL1A, MOBKL1B and RASSF2. Phosphorylates TNNI3 (cardiac Tn-I) and alters its binding affinity to TNNC1 (cardiac Tn-C) and TNNT2 (cardiac Tn-T). Phosphorylates FOXO1 on 'Ser-212' and regulates its activation and stimulates transcription of PMAIP1 in a FOXO1-dependent manner. Phosphorylates SIRT1 and inhibits SIRT1-mediated p53/TP53 deacetylation, thereby promoting p53/TP53 dependent transcription and apoptosis upon DNA damage. Acts as an inhibitor of PKB/AKT1. Phosphorylates AR on 'Ser-650' and suppresses its activity by intersecting with PKB/AKT1 signaling and antagonizing formation of AR-chromatin complexes. This Bos taurus (Bovine) protein is Serine/threonine-protein kinase 4 (STK4).